Reading from the N-terminus, the 271-residue chain is Thymidine kinase (271 aa).

Residues 74–81 (GPMFAGKT) and 152–155 (DEAQ) contribute to the ATP site. The Proton acceptor role is filled by Glu-153. Tyr-184 serves as a coordination point for substrate. Zn(2+) contacts are provided by Cys-209 and Cys-212. Tyr-237 contacts substrate. Cys-241 contributes to the Zn(2+) binding site.

This sequence belongs to the thymidine kinase family.

It carries out the reaction thymidine + ATP = dTMP + ADP + H(+). The sequence is that of Thymidine kinase (TK) from Oryza sativa subsp. japonica (Rice).